The following is a 118-amino-acid chain: Large ribosomal subunit protein uL18 (118 aa).

The protein belongs to the universal ribosomal protein uL18 family. Part of the 50S ribosomal subunit; part of the 5S rRNA/L5/L18/L25 subcomplex. Contacts the 5S and 23S rRNAs.

In terms of biological role, this is one of the proteins that bind and probably mediate the attachment of the 5S RNA into the large ribosomal subunit, where it forms part of the central protuberance. The protein is Large ribosomal subunit protein uL18 of Mycoplasmopsis pulmonis (strain UAB CTIP) (Mycoplasma pulmonis).